A 762-amino-acid polypeptide reads, in one-letter code: 1-phosphatidylinositol 4,5-bisphosphate phosphodiesterase delta-4 (762 aa).

Residues 16 to 124 (LLMQEGMPMR…WMRGLQLLVD (109 aa)) enclose the PH domain. Residues 26–53 (KVRSKSWKKLRYFRLQNDGMTVWHARQA) are substrate binding. EF-hand domains are found at residues 134–169 (RLDQWLSDWFQRGDKNQDGKMSFQEVQRLLHLMNVE), 170–205 (MDQEYAFSLFQAADTSQSGTLEGEEFVQFYKALTKR), and 206–237 (AEVQELFESFSADGQKLTLLEFLDFLQEEQKE). 10 residues coordinate Ca(2+): Asp147, Asn149, Asp151, Lys153, Glu158, Asp183, Ser185, Ser187, Thr189, and Glu194. Positions 213–243 (ESFSADGQKLTLLEFLDFLQEEQKERDCTSE) match the GBA motif. The PI-PLC X-box domain maps to 290–435 (QDMTQPLNHY…LRRKILVKGK (146 aa)). His305 is a catalytic residue. Ca(2+) is bound by residues Asn306, Glu335, and Asp337. The active site involves His350. Glu384 contacts Ca(2+). Substrate contacts are provided by Lys433 and Lys435. The segment covering 443-471 (LEYEEEEAEPELEESELALESQFETEPEP) has biased composition (acidic residues). The interval 443–483 (LEYEEEEAEPELEESELALESQFETEPEPQEQNLQNKDKKK) is disordered. At Ser457 the chain carries Phosphoserine. The 117-residue stretch at 493–609 (LSSLVIYLKS…GYVLKPDFLR (117 aa)) folds into the PI-PLC Y-box domain. Substrate is bound by residues Ser522 and Arg549. In terms of domain architecture, C2 spans 609 to 736 (RDIQSSFHPE…QGYRHIHLLS (128 aa)). Ile650, Asp652, Asn676, Asp705, Tyr706, and Asp707 together coordinate Ca(2+). A PDZ-binding motif is present at residues 731-734 (HIHL).

Interacts with GRIP1. As to quaternary structure, interacts (via GBA motif) with guanine nucleotide-binding protein G(i) alpha subunit GNAI3 (inactive GDP-bound form); high-affinity interaction. In terms of assembly, interacts (via GBA motif) with guanine nucleotide-binding protein G(i) alpha subunit GNAI3 (inactive GDP-bound form); low-affinity interaction. The cofactor is Ca(2+). Highly expressed in skeletal muscle and kidney tissues, and at moderate level in intestinal tissue. Expressed in corneal epithelial cells.

It is found in the membrane. The protein resides in the nucleus. It localises to the cytoplasm. The protein localises to the endoplasmic reticulum. The enzyme catalyses a 1,2-diacyl-sn-glycero-3-phospho-(1D-myo-inositol-4,5-bisphosphate) + H2O = 1D-myo-inositol 1,4,5-trisphosphate + a 1,2-diacyl-sn-glycerol + H(+). It carries out the reaction a 1,2-diacyl-sn-glycero-3-phospho-(1D-myo-inositol) + H2O = 1D-myo-inositol 1-phosphate + a 1,2-diacyl-sn-glycerol + H(+). Its function is as follows. Hydrolyzes the phosphatidylinositol 4,5-bisphosphate (PIP2) to generate 2 second messenger molecules diacylglycerol (DAG) and inositol 1,4,5-trisphosphate (IP3). DAG mediates the activation of protein kinase C (PKC), while IP3 releases Ca(2+) from intracellular stores. Required for acrosome reaction in sperm during fertilization, probably by acting as an important enzyme for intracellular Ca(2+) mobilization in the zona pellucida-induced acrosome reaction. May play a role in cell growth. Modulates the liver regeneration in cooperation with nuclear PKC. Overexpression up-regulates the Erk signaling pathway and proliferation. In terms of biological role, acts as a non-receptor guanine nucleotide exchange factor which binds to and activates guanine nucleotide-binding protein (G-protein) alpha subunit GNAI3. This Homo sapiens (Human) protein is 1-phosphatidylinositol 4,5-bisphosphate phosphodiesterase delta-4.